The sequence spans 440 residues: Protein naked cuticle homolog 1 (440 aa).

Gly2 carries the N-myristoyl glycine lipid modification. One can recognise an EF-hand domain in the interval 129–164; that stretch reads EEDNRQEWTFTLYDFDNNGKVTREDITSLLHTIYEV. Asp142, Asp144, Asn146, Lys148, and Asp153 together coordinate Ca(2+). Residues 192-204 show a composition bias toward polar residues; it reads RWKNCTQTNTDTP. Disordered regions lie at residues 192-221, 272-379, and 421-440; these read RWKNCTQTNTDTPNPKHKGEKCIEDSKTSE, AAPA…QRPK, and RHEHHHHHEHHHHYHHFYQS. The segment covering 211 to 221 has biased composition (basic and acidic residues); that stretch reads EKCIEDSKTSE. The segment covering 272–293 has biased composition (low complexity); the sequence is AAPATEPAKPTHATRSSNQSRS. Positions 324–336 are enriched in basic residues; that stretch reads RHTHALRSPKTHR. Residues 352-362 show a composition bias toward pro residues; that stretch reads APPPPSVPNQT. Positions 422–440 are enriched in basic residues; the sequence is HEHHHHHEHHHHYHHFYQS.

The protein belongs to the NKD family.

It localises to the cell membrane. The protein resides in the cytoplasm. Functionally, cell autonomous antagonist of the canonical Wnt signaling pathway. May activate a second Wnt signaling pathway that controls planar cell polarity. The chain is Protein naked cuticle homolog 1 (nkd1) from Danio rerio (Zebrafish).